Here is a 455-residue protein sequence, read N- to C-terminus: UDP-N-acetylmuramoylalanine--D-glutamate ligase (455 aa).

118–124 is an ATP binding site; it reads GTNGKST.

This sequence belongs to the MurCDEF family.

It localises to the cytoplasm. The enzyme catalyses UDP-N-acetyl-alpha-D-muramoyl-L-alanine + D-glutamate + ATP = UDP-N-acetyl-alpha-D-muramoyl-L-alanyl-D-glutamate + ADP + phosphate + H(+). It functions in the pathway cell wall biogenesis; peptidoglycan biosynthesis. Functionally, cell wall formation. Catalyzes the addition of glutamate to the nucleotide precursor UDP-N-acetylmuramoyl-L-alanine (UMA). In Myxococcus xanthus (strain DK1622), this protein is UDP-N-acetylmuramoylalanine--D-glutamate ligase.